Consider the following 140-residue polypeptide: MKMFKSLSLIPRIVSPFQKCYSTDLINLVGVPRVKITKGQNRYLLVNIHTHGFTKYGRVIVRGADVDNHLAIFDSILEELEPEGICAKILGGGRILNEPDNKKIKIYGTSRTFGGADHTRTRNILQAWTTYKDFKITVKQ.

Arg-42 is a binding site for substrate. His-69 (proton acceptor) is an active-site residue. 110 to 112 (SRT) serves as a coordination point for substrate.

The protein belongs to the janus family.

Functionally, janA and janB regulate somatic sex differentiation. This chain is Sex-regulated protein janus-B (janB), found in Drosophila simulans (Fruit fly).